Consider the following 328-residue polypeptide: Glucokinase (328 aa).

16 to 21 provides a ligand contact to ATP; that stretch reads ADIGGT.

It belongs to the bacterial glucokinase family.

It is found in the cytoplasm. The enzyme catalyses D-glucose + ATP = D-glucose 6-phosphate + ADP + H(+). In Neisseria meningitidis serogroup C (strain 053442), this protein is Glucokinase.